Reading from the N-terminus, the 571-residue chain is Proline--tRNA ligase (571 aa).

It belongs to the class-II aminoacyl-tRNA synthetase family. ProS type 1 subfamily. In terms of assembly, homodimer.

Its subcellular location is the cytoplasm. It catalyses the reaction tRNA(Pro) + L-proline + ATP = L-prolyl-tRNA(Pro) + AMP + diphosphate. Catalyzes the attachment of proline to tRNA(Pro) in a two-step reaction: proline is first activated by ATP to form Pro-AMP and then transferred to the acceptor end of tRNA(Pro). As ProRS can inadvertently accommodate and process non-cognate amino acids such as alanine and cysteine, to avoid such errors it has two additional distinct editing activities against alanine. One activity is designated as 'pretransfer' editing and involves the tRNA(Pro)-independent hydrolysis of activated Ala-AMP. The other activity is designated 'posttransfer' editing and involves deacylation of mischarged Ala-tRNA(Pro). The misacylated Cys-tRNA(Pro) is not edited by ProRS. The sequence is that of Proline--tRNA ligase from Syntrophotalea carbinolica (strain DSM 2380 / NBRC 103641 / GraBd1) (Pelobacter carbinolicus).